We begin with the raw amino-acid sequence, 280 residues long: Ribosomal RNA small subunit methyltransferase A (280 aa).

6 residues coordinate S-adenosyl-L-methionine: N28, L30, G55, E77, D103, and N122.

It belongs to the class I-like SAM-binding methyltransferase superfamily. rRNA adenine N(6)-methyltransferase family. RsmA subfamily.

The protein localises to the cytoplasm. The catalysed reaction is adenosine(1518)/adenosine(1519) in 16S rRNA + 4 S-adenosyl-L-methionine = N(6)-dimethyladenosine(1518)/N(6)-dimethyladenosine(1519) in 16S rRNA + 4 S-adenosyl-L-homocysteine + 4 H(+). Functionally, specifically dimethylates two adjacent adenosines (A1518 and A1519) in the loop of a conserved hairpin near the 3'-end of 16S rRNA in the 30S particle. May play a critical role in biogenesis of 30S subunits. This is Ribosomal RNA small subunit methyltransferase A from Dinoroseobacter shibae (strain DSM 16493 / NCIMB 14021 / DFL 12).